We begin with the raw amino-acid sequence, 66 residues long: Large ribosomal subunit protein bL33c (66 aa).

This sequence belongs to the bacterial ribosomal protein bL33 family.

Its subcellular location is the plastid. The protein resides in the chloroplast. In Cycas taitungensis (Prince sago), this protein is Large ribosomal subunit protein bL33c.